A 63-amino-acid chain; its full sequence is Large ribosomal subunit protein bL28 (63 aa).

Positions Met-1–Asn-22 are disordered.

It belongs to the bacterial ribosomal protein bL28 family.

The sequence is that of Large ribosomal subunit protein bL28 from Campylobacter hominis (strain ATCC BAA-381 / DSM 21671 / CCUG 45161 / LMG 19568 / NCTC 13146 / CH001A).